The following is an 81-amino-acid chain: Sulfur carrier protein TusA (81 aa).

Cysteine 19 (cysteine persulfide intermediate) is an active-site residue.

It belongs to the sulfur carrier protein TusA family.

It localises to the cytoplasm. In terms of biological role, sulfur carrier protein which probably makes part of a sulfur-relay system. In Shewanella putrefaciens (strain CN-32 / ATCC BAA-453), this protein is Sulfur carrier protein TusA.